We begin with the raw amino-acid sequence, 456 residues long: Proline-specific permease ProY (456 aa).

The Cytoplasmic portion of the chain corresponds to 1 to 17 (MESNNKLKRGLSTRHIR). 2 helical membrane-spanning segments follow: residues 18 to 38 (FMALGSAIGTGLFYGSADAIK) and 39 to 59 (MAGPSVLLAYIIGGVAAYIIM). At 60–95 (RALGEMSVHNPAASSFSRYAQENLGPLAGYITGWTY) the chain is on the cytoplasmic side. The next 2 helical transmembrane spans lie at 96–116 (CFEILIVAIADVTAFGIYMGV) and 117–137 (WFPAVPHWIWVLSVVLIICAI). Over 138–156 (NLMSVKVFGELEFWFSFFK) the chain is Cytoplasmic. Residues 157 to 177 (VATIIIMIVAGIGIIVWGIGN) form a helical membrane-spanning segment. The Periplasmic segment spans residues 178–197 (GGQPTGIHNLWSNGGFFSNG). The helical transmembrane segment at 198-218 (WLGMIMSLQMVMFAYGGIEII) threads the bilayer. Topologically, residues 219-242 (GITAGEAKDPEKSIPRAINSVPMR) are cytoplasmic. A helical transmembrane segment spans residues 243–263 (ILVFYVGTLFVIMSIYPWNQV). At 264 to 277 (GTNGSPFVLTFQHM) the chain is on the periplasmic side. The chain crosses the membrane as a helical span at residues 278–298 (GITFAASILNFVVLTASLSAI). Topologically, residues 299-331 (NSDVFGVGRMLHGMAEQGSAPKVFAKTSRRGIP) are cytoplasmic. Residues 332–352 (WVTVLVMTIALLFAVYLNYIM) traverse the membrane as a helical segment. The Periplasmic portion of the chain corresponds to 353–355 (PEN). A helical transmembrane segment spans residues 356–376 (VFLVIASLATFATVWVWIMIL). Residues 377 to 399 (LSQIAFRRRLPPEEVKALKFKVP) are Cytoplasmic-facing. Residues 400-420 (GGVVTTIAGLIFLVFIIALIG) form a helical membrane-spanning segment. Over 421 to 424 (YHPD) the chain is Periplasmic. A helical membrane pass occupies residues 425-445 (TRISLYVGFAWIVLLLIGWIF). The Cytoplasmic segment spans residues 446 to 456 (KRRRDRQLAQA).

It belongs to the amino acid-polyamine-organocation (APC) superfamily. Amino acid transporter (AAT) (TC 2.A.3.1) family.

The protein localises to the cell inner membrane. Permease that is involved in the transport across the cytoplasmic membrane of proline. The chain is Proline-specific permease ProY (proY) from Salmonella typhimurium (strain LT2 / SGSC1412 / ATCC 700720).